The sequence spans 357 residues: tRNA-specific 2-thiouridylase MnmA (357 aa).

Residues 6 to 13 (AMSGGVDS) and leucine 32 contribute to the ATP site. The Nucleophile role is filled by cysteine 101. Cysteine 101 and cysteine 193 are oxidised to a cystine. An ATP-binding site is contributed by glycine 125. The interaction with tRNA stretch occupies residues 143 to 145 (KDQ). Residue cysteine 193 is the Cysteine persulfide intermediate of the active site.

It belongs to the MnmA/TRMU family.

It localises to the cytoplasm. The enzyme catalyses S-sulfanyl-L-cysteinyl-[protein] + uridine(34) in tRNA + AH2 + ATP = 2-thiouridine(34) in tRNA + L-cysteinyl-[protein] + A + AMP + diphosphate + H(+). Functionally, catalyzes the 2-thiolation of uridine at the wobble position (U34) of tRNA, leading to the formation of s(2)U34. The sequence is that of tRNA-specific 2-thiouridylase MnmA from Mycolicibacterium gilvum (strain PYR-GCK) (Mycobacterium gilvum (strain PYR-GCK)).